Reading from the N-terminus, the 478-residue chain is Stromelysin-1 (478 aa).

The N-terminal stretch at 1-17 (MKTLPTLLLLCVALCSA) is a signal peptide. The propeptide at 18 to 100 (YPLDGASRDA…PRCGVPDVGH (83 aa)) is activation peptide. Residues 91–98 (PRCGVPDV) carry the Cysteine switch motif. Cys93 serves as a coordination point for Zn(2+). Ca(2+) is bound by residues Asp125 and Asp159. Zn(2+)-binding residues include His169 and Asp171. Ca(2+) is bound by residues Asp176, Gly177, Gly179, and Val181. His184 is a Zn(2+) binding site. Ca(2+) is bound by residues Gly191, Asn193, and Asp195. Residue His197 participates in Zn(2+) binding. Ca(2+) contacts are provided by Asp199, Asp200, and Glu202. His219 provides a ligand contact to Zn(2+). The active site involves Glu220. His223 and His229 together coordinate Zn(2+). Hemopexin repeat units follow at residues 288-337 (PVMC…WPSL), 338-384 (PSAV…GFPS), 386-434 (IRKI…FPGI), and 435-478 (NPKI…WFQC). A disulfide bridge connects residues Cys291 and Cys478. A Ca(2+)-binding site is contributed by Asp298. Ca(2+) contacts are provided by Asp390 and Asp439.

Belongs to the peptidase M10A family. Ca(2+) is required as a cofactor. It depends on Zn(2+) as a cofactor.

It is found in the secreted. It localises to the extracellular space. The protein localises to the extracellular matrix. The enzyme catalyses Preferential cleavage where P1', P2' and P3' are hydrophobic residues.. Its function is as follows. Metalloproteinase with a rather broad substrate specificity that can degrade fibronectin, laminin, gelatins of type I, III, IV, and V; collagens III, IV, X, and IX, and cartilage proteoglycans. Activates different molecules including growth factors, plasminogen or other matrix metalloproteinases such as MMP9. Once released into the extracellular matrix (ECM), the inactive pro-enzyme is activated by the plasmin cascade signaling pathway. Also acts intracellularly. For example, in dopaminergic neurons, gets activated by the serine protease HTRA2 upon stress and plays a pivotal role in DA neuronal degeneration by mediating microglial activation and alpha-synuclein/SNCA cleavage. In addition, plays a role in immune response and possesses antiviral activity against various viruses. Mechanistically, translocates from the cytoplasm into the cell nucleus upon virus infection to influence NF-kappa-B activities. The protein is Stromelysin-1 (MMP3) of Oryctolagus cuniculus (Rabbit).